A 272-amino-acid polypeptide reads, in one-letter code: Orotidine 5'-phosphate decarboxylase (272 aa).

Residue Lys93 is the Proton donor of the active site.

Belongs to the OMP decarboxylase family. Type 2 subfamily.

It catalyses the reaction orotidine 5'-phosphate + H(+) = UMP + CO2. It functions in the pathway pyrimidine metabolism; UMP biosynthesis via de novo pathway; UMP from orotate: step 2/2. The chain is Orotidine 5'-phosphate decarboxylase from Roseiflexus sp. (strain RS-1).